Reading from the N-terminus, the 540-residue chain is Testis-specific chromodomain protein Y 1 (540 aa).

Residues 6 to 66 enclose the Chromo domain; the sequence is FEVEAIVDKR…RQTEKQKKLT (61 aa). A disordered region spans residues 76-106; that stretch reads NNARRRTSRSTKANYSKNSPKTPVTDKHHRS. Polar residues predominate over residues 87-97; that stretch reads KANYSKNSPKT.

In terms of assembly, interacts (via chromo domain) with histone H3K9me3. Testis-specific. Detected in spermatids (at protein level).

The protein localises to the nucleus. It catalyses the reaction L-lysyl-[protein] + acetyl-CoA = N(6)-acetyl-L-lysyl-[protein] + CoA + H(+). Its function is as follows. Has histone acetyltransferase activity, with a preference for histone H4. The sequence is that of Testis-specific chromodomain protein Y 1 (CDY1) from Homo sapiens (Human).